The primary structure comprises 338 residues: uncharacterized protein (338 aa).

3 helical membrane passes run 11–31 (ILSL…TFAI), 249–269 (IAVF…IIPA), and 318–338 (VPTP…GLGL).

Its subcellular location is the cell membrane. This is an uncharacterized protein from Methanocaldococcus jannaschii (strain ATCC 43067 / DSM 2661 / JAL-1 / JCM 10045 / NBRC 100440) (Methanococcus jannaschii).